A 1021-amino-acid chain; its full sequence is PDZ domain-containing protein 7 (1021 aa).

PDZ domains are found at residues 86–156 and 210–279; these read AVRV…LTSS and IVHL…EVLK. Residues 324 to 344 show a composition bias toward low complexity; the sequence is SSSSVSSYASSAPCSSGSLPS. Disordered stretches follow at residues 324 to 345, 431 to 495, and 724 to 814; these read SSSS…LPSD, ITRS…DSRS, and RRGA…HRPR. Residues 729–744 show a composition bias toward pro residues; that stretch reads APPPQPPPVAPRPPRP. A compositionally biased stretch (polar residues) spans 758–767; the sequence is QQNQSQTPAQ. Residues 772–794 are compositionally biased toward basic residues; the sequence is SRSRSRSRSHSRGQGKSPGRRRS. Over residues 799 to 808 the composition is skewed to low complexity; that stretch reads PIATAATANG. Positions 858–930 constitute a PDZ 3 domain; that stretch reads TITLSKMKQS…QRAVDTIRRA (73 aa). The segment at 992–1021 is disordered; the sequence is QLQQSLSSALKVPQSIPKLSPILKDPHDPS.

Homodimerizes (via PDZ2 domain). Component of USH2 complex, composed of ADGRV1, PDZD7, USH2A and WHRN. Interacts (via PDZ domains) with WHRN; the interaction is direct. Interacts with USH1G. Interacts with ADGRV1 (via the cytoplasmic region). Interacts with USH2A (via the cytoplasmic region). Interacts with MYO7A (via MyTH4-FERM domains). In terms of tissue distribution, isoform 1 is expressed in developing and adult cochlea but not retina. Isoform 2 is expressed in developing and adult cochlea and retina. Isoform 3 is expressed in adult cochlea and retina. Isoform 4 is expressed in retina and developing cochlea but not adult cochlea. Isoform 5 is expressed in adult cochlea but not in developing cochlea or retina.

It is found in the cell projection. The protein localises to the cilium. Its subcellular location is the nucleus. It localises to the stereocilium. Its function is as follows. In cochlear developing hair cells, essential in organizing the USH2 complex at stereocilia ankle links. Blocks inhibition of adenylate cyclase activity mediated by ADGRV1. In Mus musculus (Mouse), this protein is PDZ domain-containing protein 7.